Reading from the N-terminus, the 207-residue chain is Cytochrome c oxidase subunit 3 (207 aa).

5 consecutive transmembrane segments (helical) span residues 30–50, 67–87, 101–121, 144–164, and 186–206; these read FWLFLGGETVLFASLFATFLA, VTLVFIATMLLLTSSLTSVYA, LWLGITILLGAGFLGLEIYEF, LVGTHGAHVAFGLMWISTLMI, and WHFIDVVWVFIFTVVYLMGMV.

The protein belongs to the cytochrome c oxidase subunit 3 family.

It is found in the cell membrane. It carries out the reaction 4 Fe(II)-[cytochrome c] + O2 + 8 H(+)(in) = 4 Fe(III)-[cytochrome c] + 2 H2O + 4 H(+)(out). This Bacillus subtilis (strain 168) protein is Cytochrome c oxidase subunit 3 (ctaE).